The primary structure comprises 281 residues: MEIFNTVASLKNFVAHARAEGKTIGLVPTMGALHRGHISLIHRAVAECDICVASVFVNPTQFNDKRDLECYPRTPEADAAVLAEAACHAVFMPSVEEVYPEPDTRVFDLGSVAEVMEGKHRPGHFNGVAQVVSKLFMMVEPDKAYFGEKDFQQIAVIRSMVNLLGLPVTIVACPIIREEDGLALSSRNVRLGTEERAIAPSIARILGQSRTLRPAHTPEAVTRWVTESLNALPHLQVEYFEIVDGNSLQKIDNWQDTDHAVGCITVYCGEVRLIDNIKYED.

30–37 serves as a coordination point for ATP; that stretch reads MGALHRGH. The Proton donor role is filled by histidine 37. Glutamine 61 is a binding site for (R)-pantoate. Residue glutamine 61 coordinates beta-alanine. Position 147 to 150 (147 to 150) interacts with ATP; that stretch reads GEKD. A (R)-pantoate-binding site is contributed by glutamine 153. Residues isoleucine 176 and 184 to 187 each bind ATP; that span reads LSSR.

The protein belongs to the pantothenate synthetase family. As to quaternary structure, homodimer.

Its subcellular location is the cytoplasm. The enzyme catalyses (R)-pantoate + beta-alanine + ATP = (R)-pantothenate + AMP + diphosphate + H(+). Its pathway is cofactor biosynthesis; (R)-pantothenate biosynthesis; (R)-pantothenate from (R)-pantoate and beta-alanine: step 1/1. Catalyzes the condensation of pantoate with beta-alanine in an ATP-dependent reaction via a pantoyl-adenylate intermediate. This chain is Pantothenate synthetase, found in Porphyromonas gingivalis (strain ATCC BAA-308 / W83).